The chain runs to 404 residues: Multidrug resistance protein MdtG (404 aa).

The next 11 helical transmembrane spans lie at 19–39 (LGCF…PLYV), 56–76 (LVFS…GGLA), 90–110 (LGMA…QFLI), 113–133 (ALLG…ATQV), 144–164 (TLST…GLLA), 171–191 (PVFF…FFFI), 222–242 (LFVT…ILTL), 254–274 (IAFI…LSAP), 288–308 (ILIV…FVQT), 317–337 (FLLG…LVYN), and 376–396 (AVFC…WNSL).

This sequence belongs to the major facilitator superfamily. DHA1 family. MdtG (TC 2.A.1.2.20) subfamily.

The protein localises to the cell inner membrane. In Salmonella schwarzengrund (strain CVM19633), this protein is Multidrug resistance protein MdtG.